The primary structure comprises 318 residues: Transaldolase (318 aa).

The active-site Schiff-base intermediate with substrate is the K132.

The protein belongs to the transaldolase family. Type 1 subfamily. Homodimer.

It is found in the cytoplasm. The enzyme catalyses D-sedoheptulose 7-phosphate + D-glyceraldehyde 3-phosphate = D-erythrose 4-phosphate + beta-D-fructose 6-phosphate. Its pathway is carbohydrate degradation; pentose phosphate pathway; D-glyceraldehyde 3-phosphate and beta-D-fructose 6-phosphate from D-ribose 5-phosphate and D-xylulose 5-phosphate (non-oxidative stage): step 2/3. Its function is as follows. Transaldolase is important for the balance of metabolites in the pentose-phosphate pathway. This chain is Transaldolase, found in Shewanella woodyi (strain ATCC 51908 / MS32).